A 256-amino-acid polypeptide reads, in one-letter code: uncharacterized protein (256 aa).

The N-terminal stretch at 1–22 (MNNFRQCALCIGTSVLILLVSG) is a signal peptide. Cys-23 carries the N-palmitoyl cysteine lipid modification. Cys-23 is lipidated: S-diacylglycerol cysteine.

It belongs to the staphylococcal tandem lipoprotein family.

The protein resides in the cell membrane. This is an uncharacterized protein from Staphylococcus aureus (strain bovine RF122 / ET3-1).